The chain runs to 160 residues: Dysbindin domain-containing protein 1 (160 aa).

Disordered stretches follow at residues 1-34 and 95-160; these read MESP…GDTC and ADSD…PKED. Residues Ser3, Ser97, and Ser121 each carry the phosphoserine modification. Residues 127-143 show a composition bias toward basic and acidic residues; the sequence is TRAEQNREKQTPSDPER.

It belongs to the dysbindin family.

The polypeptide is Dysbindin domain-containing protein 1 (Dbndd1) (Rattus norvegicus (Rat)).